Consider the following 422-residue polypeptide: Gamma-glutamyl phosphate reductase (422 aa).

The protein belongs to the gamma-glutamyl phosphate reductase family.

The protein resides in the cytoplasm. It carries out the reaction L-glutamate 5-semialdehyde + phosphate + NADP(+) = L-glutamyl 5-phosphate + NADPH + H(+). Its pathway is amino-acid biosynthesis; L-proline biosynthesis; L-glutamate 5-semialdehyde from L-glutamate: step 2/2. Its function is as follows. Catalyzes the NADPH-dependent reduction of L-glutamate 5-phosphate into L-glutamate 5-semialdehyde and phosphate. The product spontaneously undergoes cyclization to form 1-pyrroline-5-carboxylate. This chain is Gamma-glutamyl phosphate reductase, found in Chloroflexus aggregans (strain MD-66 / DSM 9485).